A 283-amino-acid polypeptide reads, in one-letter code: Pantothenate synthetase (283 aa).

Residue 30–37 participates in ATP binding; that stretch reads MGYFHEGH. The active-site Proton donor is H37. Q61 contacts (R)-pantoate. Q61 contributes to the beta-alanine binding site. An ATP-binding site is contributed by 147–150; it reads GEKD. Position 153 (Q153) interacts with (R)-pantoate. ATP is bound by residues V176 and 184–187; that span reads MSSR.

It belongs to the pantothenate synthetase family. In terms of assembly, homodimer.

Its subcellular location is the cytoplasm. The catalysed reaction is (R)-pantoate + beta-alanine + ATP = (R)-pantothenate + AMP + diphosphate + H(+). It participates in cofactor biosynthesis; (R)-pantothenate biosynthesis; (R)-pantothenate from (R)-pantoate and beta-alanine: step 1/1. In terms of biological role, catalyzes the condensation of pantoate with beta-alanine in an ATP-dependent reaction via a pantoyl-adenylate intermediate. In Syntrophobacter fumaroxidans (strain DSM 10017 / MPOB), this protein is Pantothenate synthetase.